Here is a 469-residue protein sequence, read N- to C-terminus: uncharacterized protein (469 aa).

The HTH gntR-type domain maps to 13–81; sequence TPLYEQLYTF…PKIGWFAAEV (69 aa). The H-T-H motif DNA-binding region spans 41 to 60; sequence KRRLSSLLDVSTATIERAYE. N6-(pyridoxal phosphate)lysine is present on Lys309.

The protein in the C-terminal section; belongs to the class-I pyridoxal-phosphate-dependent aminotransferase family. The cofactor is pyridoxal 5'-phosphate.

This is an uncharacterized protein from Bacillus subtilis (strain 168).